A 471-amino-acid chain; its full sequence is Glutamate--tRNA ligase (471 aa).

The 'HIGH' region motif lies at 9 to 19; sequence PSPTGYLHVGG. Residues Cys-98, Cys-100, Cys-125, and Asp-127 each contribute to the Zn(2+) site. The 'KMSKS' region signature appears at 237–241; that stretch reads KLSKR. ATP is bound at residue Lys-240.

This sequence belongs to the class-I aminoacyl-tRNA synthetase family. Glutamate--tRNA ligase type 1 subfamily. In terms of assembly, monomer. Zn(2+) serves as cofactor.

The protein localises to the cytoplasm. The catalysed reaction is tRNA(Glu) + L-glutamate + ATP = L-glutamyl-tRNA(Glu) + AMP + diphosphate. In terms of biological role, catalyzes the attachment of glutamate to tRNA(Glu) in a two-step reaction: glutamate is first activated by ATP to form Glu-AMP and then transferred to the acceptor end of tRNA(Glu). In Yersinia pseudotuberculosis serotype O:1b (strain IP 31758), this protein is Glutamate--tRNA ligase.